The chain runs to 388 residues: uncharacterized protein (388 aa).

It localises to the mitochondrion. This is an uncharacterized protein from Dictyostelium citrinum (Slime mold).